A 36-amino-acid polypeptide reads, in one-letter code: MISDEQLNSLAITFGIVMMTLIVIYHAVDSTMSPKN.

At 1–9 (MISDEQLNS) the chain is on the lumenal side. Residues 10–28 (LAITFGIVMMTLIVIYHAV) form a helical membrane-spanning segment. The Cytoplasmic portion of the chain corresponds to 29-36 (DSTMSPKN).

Belongs to the OST4 family. Component of the oligosaccharyltransferase (OST) complex, which appears to exist in two assemblies comprising OST1, OST2, OST4, OST5, STT3, SWP1, WPB1, and either OST3 or OST6. OST assembly occurs through the formation of 3 subcomplexes. Subcomplex 1 contains OST1 and OST5, subcomplex 2 contains STT3, OST3, and OST4, and subcomplex 3 contains OST2, WBP1, and SWP1. Interacts with SEC61, SBH1 and SSS1.

The protein resides in the endoplasmic reticulum membrane. It functions in the pathway protein modification; protein glycosylation. In terms of biological role, subunit of the oligosaccharyl transferase (OST) complex that catalyzes the initial transfer of a defined glycan (Glc(3)Man(9)GlcNAc(2) in eukaryotes) from the lipid carrier dolichol-pyrophosphate to an asparagine residue within an Asn-X-Ser/Thr consensus motif in nascent polypeptide chains, the first step in protein N-glycosylation. N-glycosylation occurs cotranslationally and the complex associates with the Sec61 complex at the channel-forming translocon complex that mediates protein translocation across the endoplasmic reticulum (ER). All subunits are required for a maximal enzyme activity. This chain is Dolichyl-diphosphooligosaccharide--protein glycosyltransferase subunit OST4 (OST4), found in Saccharomyces cerevisiae (strain ATCC 204508 / S288c) (Baker's yeast).